The chain runs to 155 residues: MSRRKNAEKRIVNPDPVYRNRLVNMLVNRILKNGKKSLAYRILYKAMKNIKTKTQKNPLFILRQAIRKATPKVAVKARRVGGSTYQVPVEIQSSQGKALAIRWLLTSAKKRAGRNFISKLSNEIIDTARDTGNTIRKKEETHRMAESNRAFAHFR.

The protein belongs to the universal ribosomal protein uS7 family. In terms of assembly, part of the 30S ribosomal subunit.

The protein localises to the plastid. It localises to the chloroplast. One of the primary rRNA binding proteins, it binds directly to 16S rRNA where it nucleates assembly of the head domain of the 30S subunit. The sequence is that of Small ribosomal subunit protein uS7c (rps7) from Chaetosphaeridium globosum (Charophycean green alga).